Reading from the N-terminus, the 317-residue chain is L-lactate dehydrogenase (317 aa).

Residues Val-16, Asp-37, Lys-42, Tyr-68, and 82–83 each bind NAD(+); that span reads GA. 2 residues coordinate substrate: Gln-85 and Arg-91. NAD(+) contacts are provided by residues Thr-104, 121 to 123, and Ser-146; that span reads ATN. Residue 123 to 126 coordinates substrate; it reads NPVD. Residue 151 to 154 coordinates substrate; the sequence is DTAR. Residues Arg-156 and His-171 each coordinate beta-D-fructose 1,6-bisphosphate. His-178 acts as the Proton acceptor in catalysis. Position 222 is a phosphotyrosine (Tyr-222). Thr-231 serves as a coordination point for substrate.

Belongs to the LDH/MDH superfamily. LDH family. As to quaternary structure, homotetramer.

Its subcellular location is the cytoplasm. The enzyme catalyses (S)-lactate + NAD(+) = pyruvate + NADH + H(+). It functions in the pathway fermentation; pyruvate fermentation to lactate; (S)-lactate from pyruvate: step 1/1. With respect to regulation, allosterically activated by fructose 1,6-bisphosphate (FBP). Catalyzes the conversion of lactate to pyruvate. The chain is L-lactate dehydrogenase from Corynebacterium efficiens (strain DSM 44549 / YS-314 / AJ 12310 / JCM 11189 / NBRC 100395).